The sequence spans 57 residues: Small ribosomal subunit protein bS21 (57 aa).

The interval 31 to 57 is disordered; sequence EVRKRKHYEKPSVRRKKKSEAARKRKF. Over residues 33-57 the composition is skewed to basic residues; sequence RKRKHYEKPSVRRKKKSEAARKRKF.

The protein belongs to the bacterial ribosomal protein bS21 family.

The polypeptide is Small ribosomal subunit protein bS21 (rpsU) (Halalkalibacterium halodurans (strain ATCC BAA-125 / DSM 18197 / FERM 7344 / JCM 9153 / C-125) (Bacillus halodurans)).